The chain runs to 634 residues: TATA box-binding protein-associated factor RNA polymerase I subunit B (634 aa).

Residues 19 to 51 (LVCEYCGHGSEYAEDDADNGFFTCRQCSAIHTS) form an RRN7-type zinc finger. Positions 21, 24, 42, and 45 each coordinate Zn(2+). The segment at 51 to 80 (STQNTATNPFDFPMTPAHLSAHRRPTQPTP) is B-reader. A disordered region spans residues 56–117 (ATNPFDFPMT…EPRDFATGAN (62 aa)). Over residues 77–87 (QPTPTPKPFPA) the composition is skewed to pro residues. Residues 81 to 83 (TPK) form a B-linker region. An N-terminal cyclin fold region spans residues 84-281 (PFPAPRGAAT…DKLLGSSLND (198 aa)). The segment covering 88–98 (PRGAATGAAAP) has biased composition (low complexity). The interval 282–284 (CPL) is C-terminal cyclin fold.

Belongs to the RRN7/TAF1B family.

Its subcellular location is the nucleus. It localises to the nucleolus. Component of RNA polymerase I core factor complex that acts as a GTF2B/TFIIB-like factor and plays a key role in multiple steps during transcription initiation such as pre-initiation complex (PIC) assembly and postpolymerase recruitment events in polymerase I (Pol I) transcription. Binds rDNA promoters and plays a role in Pol I recruitment. This is TATA box-binding protein-associated factor RNA polymerase I subunit B from Oryza sativa subsp. indica (Rice).